The chain runs to 285 residues: 4-diphosphocytidyl-2-C-methyl-D-erythritol kinase (285 aa).

Residue K9 is part of the active site. Residue 89 to 99 (PLGAGLGGGSS) coordinates ATP. The active site involves D131.

Belongs to the GHMP kinase family. IspE subfamily.

It carries out the reaction 4-CDP-2-C-methyl-D-erythritol + ATP = 4-CDP-2-C-methyl-D-erythritol 2-phosphate + ADP + H(+). It functions in the pathway isoprenoid biosynthesis; isopentenyl diphosphate biosynthesis via DXP pathway; isopentenyl diphosphate from 1-deoxy-D-xylulose 5-phosphate: step 3/6. Its function is as follows. Catalyzes the phosphorylation of the position 2 hydroxy group of 4-diphosphocytidyl-2C-methyl-D-erythritol. This chain is 4-diphosphocytidyl-2-C-methyl-D-erythritol kinase, found in Thermodesulfovibrio yellowstonii (strain ATCC 51303 / DSM 11347 / YP87).